The following is a 180-amino-acid chain: LDLR chaperone boca (180 aa).

The signal sequence occupies residues 1–18; the sequence is MQTRLVLLLLALTPLVLA. The span at 48 to 61 shows a compositional bias: acidic residues; it reads QWEEDEEPLEDDEL. Residues 48–78 are disordered; the sequence is QWEEDEEPLEDDELPEHLRPQPKLDLSNLDS. A structured core region spans residues 93-166; it reads TLMTFVSVTG…QERCKGVTIE (74 aa). Positions 177–180 match the Prevents secretion from ER motif; that stretch reads KDEL.

Belongs to the MESD family. As to quaternary structure, monomer. Interacts with Arrow and Yolkless.

It localises to the endoplasmic reticulum. Chaperone specifically assisting the folding of beta-propeller/EGF modules within the family of low-density lipoprotein receptors (LDLRs). Acts as a modulator of the Wg pathway, since some LDLRs are coreceptors for the canonical Wnt pathway. The sequence is that of LDLR chaperone boca (boca) from Drosophila melanogaster (Fruit fly).